A 501-amino-acid polypeptide reads, in one-letter code: Ribose import ATP-binding protein RbsA (501 aa).

2 ABC transporter domains span residues 6–242 and 253–495; these read LQLS…VGRK and VHGQ…VGKK. 38–45 provides a ligand contact to ATP; that stretch reads GENGAGKS.

It belongs to the ABC transporter superfamily. Ribose importer (TC 3.A.1.2.1) family. The complex is composed of an ATP-binding protein (RbsA), two transmembrane proteins (RbsC) and a solute-binding protein (RbsB).

The protein resides in the cell inner membrane. The enzyme catalyses D-ribose(out) + ATP + H2O = D-ribose(in) + ADP + phosphate + H(+). In terms of biological role, part of the ABC transporter complex RbsABC involved in ribose import. Responsible for energy coupling to the transport system. The chain is Ribose import ATP-binding protein RbsA from Vibrio vulnificus (strain CMCP6).